A 174-amino-acid chain; its full sequence is MTQPLFLIGPRGCGKTTVGMALADSLNRRFVDTDQWLQSQLNMTVAEIVEREEWAGFRARETAALEAVTAASTVIATGGGIILTEFNRHFMQNNGIVVYLCAPVSVLVNRLQAAPEEDLRPTLTGKPLSEEVQEVLEERDALYREVAHIIIDATNEPSQVISEIRSALAQTINC.

Position 12 to 17 (12 to 17 (GCGKTT)) interacts with ATP. Mg(2+)-binding residues include Thr16 and Asp32. Residues Asp34, Arg58, and Gly79 each coordinate substrate. Positions 112 to 126 (QAAPEEDLRPTLTGK) are LID domain. Residue Arg120 coordinates ATP. Arg139 contacts substrate.

It belongs to the shikimate kinase family. AroL subfamily. As to quaternary structure, monomer. Requires Mg(2+) as cofactor.

It localises to the cytoplasm. The catalysed reaction is shikimate + ATP = 3-phosphoshikimate + ADP + H(+). The protein operates within metabolic intermediate biosynthesis; chorismate biosynthesis; chorismate from D-erythrose 4-phosphate and phosphoenolpyruvate: step 5/7. Functionally, catalyzes the specific phosphorylation of the 3-hydroxyl group of shikimic acid using ATP as a cosubstrate. The sequence is that of Shikimate kinase 2 from Shigella boydii serotype 18 (strain CDC 3083-94 / BS512).